A 503-amino-acid polypeptide reads, in one-letter code: Ribonuclease Y (503 aa).

The chain crosses the membrane as a helical span at residues 2–22 (GIIIGLIIVSVALIISLCSLL). A KH domain is found at 193–253 (TTNLVKLPND…IRREIATKTL (61 aa)). The 94-residue stretch at 319–412 (VLLHSVEVAK…VAIADAISAS (94 aa)) folds into the HD domain.

The protein belongs to the RNase Y family.

It localises to the cell membrane. In terms of biological role, endoribonuclease that initiates mRNA decay. This chain is Ribonuclease Y, found in Mesoplasma florum (strain ATCC 33453 / NBRC 100688 / NCTC 11704 / L1) (Acholeplasma florum).